A 458-amino-acid polypeptide reads, in one-letter code: Na(+)/H(+) antiporter NhaA (458 aa).

The next 12 membrane-spanning stretches (helical) occupy residues 27–47, 78–98, 114–134, 143–163, 172–192, 201–221, 222–242, 249–269, 316–336, 346–366, 388–408, and 421–441; these read FLHV…AALI, LHFW…GMEI, ILPI…YLSF, GWAV…ALLG, VILL…IAFF, GLAI…IGLA, SAWL…ITGV, VILG…PLTI, PWVA…VSFA, FLVV…GIIT, ILLI…VSML, and IGVL…GLIY.

Belongs to the NhaA Na(+)/H(+) (TC 2.A.33) antiporter family.

Its subcellular location is the cell inner membrane. The catalysed reaction is Na(+)(in) + 2 H(+)(out) = Na(+)(out) + 2 H(+)(in). Na(+)/H(+) antiporter that extrudes sodium in exchange for external protons. The protein is Na(+)/H(+) antiporter NhaA of Bartonella quintana (strain Toulouse) (Rochalimaea quintana).